A 380-amino-acid polypeptide reads, in one-letter code: Flap endonuclease 1-A (380 aa).

The segment at 1–105 is N-domain; it reads MGIKGLTKLL…QELAKRYSKR (105 aa). Position 34 (Asp34) interacts with Mg(2+). Arg71 is a DNA binding site. Asp87, Glu159, Glu161, Asp180, and Asp182 together coordinate Mg(2+). The segment at 123–254 is I-domain; it reads AIEKFSKRTV…QTALKLIRQH (132 aa). A DNA-binding site is contributed by Glu159. DNA-binding residues include Gly232 and Asp234. Asp234 is a Mg(2+) binding site. The tract at residues 336–344 is interaction with PCNA; it reads SQGRLESFF. The interval 351-380 is disordered; sequence SVPLKRKDTSEKPTKAVANKKTKGAGGKKK. Positions 355–364 are enriched in basic and acidic residues; the sequence is KRKDTSEKPT. Residues 368–380 are compositionally biased toward basic residues; it reads ANKKTKGAGGKKK.

This sequence belongs to the XPG/RAD2 endonuclease family. FEN1 subfamily. In terms of assembly, interacts with PCNA. Three molecules of FEN1 bind to one PCNA trimer with each molecule binding to one PCNA monomer. PCNA stimulates the nuclease activity without altering cleavage specificity. The cofactor is Mg(2+). Post-translationally, phosphorylated. Phosphorylation upon DNA damage induces relocalization to the nuclear plasma. In terms of tissue distribution, strongly expressed in proliferating tissues: root and shoot apical meristem, tiller bud, leaf, ligule primordia, marginal meristem of young leaves and panicles. Not expressed in mature leaves when exposed to UV.

Its subcellular location is the nucleus. The protein resides in the nucleolus. It is found in the nucleoplasm. It localises to the mitochondrion. Inhibited by NaCl. In terms of biological role, structure-specific nuclease with 5'-flap endonuclease and 5'-3' exonuclease activities involved in DNA replication and repair. During DNA replication, cleaves the 5'-overhanging flap structure that is generated by displacement synthesis when DNA polymerase encounters the 5'-end of a downstream Okazaki fragment. It enters the flap from the 5'-end and then tracks to cleave the flap base, leaving a nick for ligation. Also involved in the long patch base excision repair (LP-BER) pathway, by cleaving within the apurinic/apyrimidinic (AP) site-terminated flap. Acts as a genome stabilization factor that prevents flaps from equilibrating into structures that lead to duplications and deletions. Also possesses 5'-3' exonuclease activity on nicked or gapped double-stranded DNA, and exhibits RNase H activity. Also involved in replication and repair of rDNA and in repairing mitochondrial DNA. May be required for cell proliferation. The chain is Flap endonuclease 1-A from Oryza sativa subsp. japonica (Rice).